Here is a 535-residue protein sequence, read N- to C-terminus: UDP-glucuronosyltransferase 1A1 (535 aa).

A signal peptide spans 1–29; the sequence is MTVVCWSSRLLLLLPYLLLCVFGPSASHA. Asparagine 89, asparagine 297, and asparagine 435 each carry an N-linked (GlcNAc...) asparagine glycan. A helical membrane pass occupies residues 493–509; sequence VIGFLLAIVLTVVFIVF.

It belongs to the UDP-glycosyltransferase family. As to quaternary structure, homodimers. Homooligomer. Interacts with UGT1A3, UGT1A4, UGT1A6, UGT1A7, UGT1A8, UGT1A9 and UGT1A10 to form heterodimers. Highly expressed in liver and at lower levels in colon, kidney, stomach and intestine.

It localises to the endoplasmic reticulum membrane. It catalyses the reaction glucuronate acceptor + UDP-alpha-D-glucuronate = acceptor beta-D-glucuronoside + UDP + H(+). It carries out the reaction 17beta-estradiol + UDP-alpha-D-glucuronate = 17beta-estradiol 3-O-(beta-D-glucuronate) + UDP + H(+). The enzyme catalyses 2-hydroxyestrone + UDP-alpha-D-glucuronate = 2-hydroxyestrone 3-O-(beta-D-glucuronate) + UDP + H(+). The catalysed reaction is 2-hydroxy-17beta-estradiol + UDP-alpha-D-glucuronate = 2-hydroxy-17beta-estradiol 3-O-(beta-D-glucuronate) + UDP + H(+). It catalyses the reaction 2-methoxy-17beta-estradiol + UDP-alpha-D-glucuronate = 2-methoxy-17beta-estradiol 3-O-(beta-D-glucuronate) + UDP + H(+). It carries out the reaction 17alpha-estradiol + UDP-alpha-D-glucuronate = 17alpha-estradiol 3-O-(beta-D-glucuronate) + UDP + H(+). The enzyme catalyses 16beta,17beta-estriol + UDP-alpha-D-glucuronate = 16beta,17beta-estriol 16-O-(beta-D-glucuronate) + UDP + H(+). The catalysed reaction is losartan + UDP-alpha-D-glucuronate = losartan-2-N-beta-D-glucuronide + UDP. It catalyses the reaction prunetin + UDP-alpha-D-glucuronate = prunetin-4'-O-beta-D-glucuronide + UDP. It carries out the reaction SN-38 + UDP-alpha-D-glucuronate = SN-38 O-beta-D-glucuronide + UDP + H(+). The enzyme catalyses (4Z,15Z)-bilirubin IXalpha + UDP-alpha-D-glucuronate = (4Z,15Z)-bilirubin IXalpha C12-beta-D-glucuronoside + UDP. The catalysed reaction is (4Z,15Z)-bilirubin IXalpha + UDP-alpha-D-glucuronate = (4Z,15Z)-bilirubin IXalpha C8-beta-D-glucuronoside + UDP. It catalyses the reaction (4Z,15Z)-bilirubin IXalpha C8-beta-D-glucuronoside + UDP-alpha-D-glucuronate = (4Z,15Z)-bilirubin IXalpha C8,C12-beta-D-bisglucuronoside + UDP. It carries out the reaction (4Z,15Z)-bilirubin IXalpha C12-beta-D-glucuronoside + UDP-alpha-D-glucuronate = (4Z,15Z)-bilirubin IXalpha C8,C12-beta-D-bisglucuronoside + UDP. The enzyme catalyses 8-iso-prostaglandin F2alpha + UDP-alpha-D-glucuronate = 8-iso-prostaglandin F2alpha-glucuronide + UDP + H(+). The catalysed reaction is (5Z,8Z,11Z,14Z)-eicosatetraenoate + UDP-alpha-D-glucuronate = O-[(5Z),(8Z),(11Z),(14Z)-eicosatetraenoyl]-beta-D-glucuronate + UDP. It catalyses the reaction 15-hydroxy-(5Z,8Z,11Z,13E)-eicosatetraenoate + UDP-alpha-D-glucuronate = 15-O-(beta-D-glucuronosyl)-(5Z,8Z,11Z,14Z)-eicosatetraenoate + UDP + H(+). It carries out the reaction 20-hydroxy-(5Z,8Z,11Z,14Z)-eicosatetraenoate + UDP-alpha-D-glucuronate = 20-O-(beta-D-glucuronosyl)-(5Z,8Z,11Z,14Z)-eicosatetraenoate + UDP + H(+). The enzyme catalyses prostaglandin B1 + UDP-alpha-D-glucuronate = 15-O-(beta-D-glucuronosyl)-prostaglandin B1 + UDP + H(+). The catalysed reaction is (E)-ferulate + UDP-alpha-D-glucuronate = (E)-4-O-(beta-D-glucuronosyl)-ferulate + UDP + H(+). It catalyses the reaction (E)-ferulate + UDP-alpha-D-glucuronate = (E)-ferulic acid beta-D-glucuronate ester + UDP. Its function is as follows. UDP-glucuronosyltransferase (UGT) that catalyzes phase II biotransformation reactions in which lipophilic substrates are conjugated with glucuronic acid to increase the metabolite's water solubility, thereby facilitating excretion into either the urine or bile. Essential for the elimination and detoxification of drugs, xenobiotics and endogenous compounds. Catalyzes the glucuronidation of endogenous estrogen hormones such as estradiol, estrone and estriol. Involved in the glucuronidation of bilirubin, a degradation product occurring in the normal catabolic pathway that breaks down heme in vertebrates. Involved in the glucuronidation of arachidonic acid (AA) and AA-derived eicosanoids including 15-HETE, 20-HETE, PGB1 and F2-isoprostane (8-iso-PGF2alpha). Involved in the glucuronidation of the phytochemical ferulic acid at the phenolic or the carboxylic acid group. Also catalyzes the glucuronidation the isoflavones genistein, daidzein, glycitein, formononetin, biochanin A and prunetin, which are phytoestrogens with anticancer and cardiovascular properties. Involved in the glucuronidation of the AGTR1 angiotensin receptor antagonist losartan, a drug which can inhibit the effect of angiotensin II. Involved in the biotransformation of 7-ethyl-10-hydroxycamptothecin (SN-38), the pharmacologically active metabolite of the anticancer drug irinotecan. The protein is UDP-glucuronosyltransferase 1A1 of Mus musculus (Mouse).